A 238-amino-acid polypeptide reads, in one-letter code: Ribonuclease PH (238 aa).

Phosphate-binding positions include arginine 86 and 124-126; that span reads GTR.

Belongs to the RNase PH family. As to quaternary structure, homohexameric ring arranged as a trimer of dimers.

The enzyme catalyses tRNA(n+1) + phosphate = tRNA(n) + a ribonucleoside 5'-diphosphate. In terms of biological role, phosphorolytic 3'-5' exoribonuclease that plays an important role in tRNA 3'-end maturation. Removes nucleotide residues following the 3'-CCA terminus of tRNAs; can also add nucleotides to the ends of RNA molecules by using nucleoside diphosphates as substrates, but this may not be physiologically important. Probably plays a role in initiation of 16S rRNA degradation (leading to ribosome degradation) during starvation. The protein is Ribonuclease PH of Cupriavidus metallidurans (strain ATCC 43123 / DSM 2839 / NBRC 102507 / CH34) (Ralstonia metallidurans).